We begin with the raw amino-acid sequence, 85 residues long: UPF0386 protein Plav_1374 (85 aa).

This sequence belongs to the UPF0386 family.

The sequence is that of UPF0386 protein Plav_1374 from Parvibaculum lavamentivorans (strain DS-1 / DSM 13023 / NCIMB 13966).